Here is a 120-residue protein sequence, read N- to C-terminus: Large ribosomal subunit protein bL19 (120 aa).

Belongs to the bacterial ribosomal protein bL19 family.

In terms of biological role, this protein is located at the 30S-50S ribosomal subunit interface and may play a role in the structure and function of the aminoacyl-tRNA binding site. In Dichelobacter nodosus (strain VCS1703A), this protein is Large ribosomal subunit protein bL19.